A 1345-amino-acid chain; its full sequence is DNA-directed RNA polymerase subunit beta (1345 aa).

This sequence belongs to the RNA polymerase beta chain family. In terms of assembly, the RNAP catalytic core consists of 2 alpha, 1 beta, 1 beta' and 1 omega subunit. When a sigma factor is associated with the core the holoenzyme is formed, which can initiate transcription.

The enzyme catalyses RNA(n) + a ribonucleoside 5'-triphosphate = RNA(n+1) + diphosphate. Its function is as follows. DNA-dependent RNA polymerase catalyzes the transcription of DNA into RNA using the four ribonucleoside triphosphates as substrates. In Shewanella sp. (strain MR-4), this protein is DNA-directed RNA polymerase subunit beta.